We begin with the raw amino-acid sequence, 77 residues long: Exodeoxyribonuclease 7 small subunit (77 aa).

It belongs to the XseB family. Heterooligomer composed of large and small subunits.

The protein resides in the cytoplasm. The catalysed reaction is Exonucleolytic cleavage in either 5'- to 3'- or 3'- to 5'-direction to yield nucleoside 5'-phosphates.. Bidirectionally degrades single-stranded DNA into large acid-insoluble oligonucleotides, which are then degraded further into small acid-soluble oligonucleotides. The polypeptide is Exodeoxyribonuclease 7 small subunit (Clostridium acetobutylicum (strain ATCC 824 / DSM 792 / JCM 1419 / IAM 19013 / LMG 5710 / NBRC 13948 / NRRL B-527 / VKM B-1787 / 2291 / W)).